The primary structure comprises 302 residues: Oxygen-dependent coproporphyrinogen-III oxidase (302 aa).

Serine 94 provides a ligand contact to substrate. The a divalent metal cation site is built by histidine 98 and histidine 108. The Proton donor role is filled by histidine 108. 110-112 (NVR) contributes to the substrate binding site. A divalent metal cation contacts are provided by histidine 147 and histidine 177. Positions 242–277 (YVEFNLVFDRGTLFGLQSGGRAESILMSMPPVANWR) are important for dimerization. 260–262 (GGR) is a binding site for substrate.

It belongs to the aerobic coproporphyrinogen-III oxidase family. Homodimer. Requires a divalent metal cation as cofactor.

The protein resides in the cytoplasm. It carries out the reaction coproporphyrinogen III + O2 + 2 H(+) = protoporphyrinogen IX + 2 CO2 + 2 H2O. Its pathway is porphyrin-containing compound metabolism; protoporphyrin-IX biosynthesis; protoporphyrinogen-IX from coproporphyrinogen-III (O2 route): step 1/1. Involved in the heme biosynthesis. Catalyzes the aerobic oxidative decarboxylation of propionate groups of rings A and B of coproporphyrinogen-III to yield the vinyl groups in protoporphyrinogen-IX. The sequence is that of Oxygen-dependent coproporphyrinogen-III oxidase from Ralstonia pickettii (strain 12J).